The sequence spans 625 residues: MQPNIQWLDTPAVFRVGQLPAHSDHRYYATLAEMAQQQSSFEQSLNGTWQFHYSVNAASRPKSFYELAFDAQDFEPITVPQHIELAGYEQLHYINTMYPWEGHYYRRPAFSTSDDKQHLGMFSEADYNPVGSYLHHFDLTPALRNQRVIIRFEGVEQAMYVWLNGQFIGYAEDSFTPSEFDLTPYLKETDNCLAVEVHKRSSAAFIEDQDFFRFFGIFRDVKLLAKPRTHLEDLWVIPEYDVVQQTGQVKLRLQFSGDENRVHLRIRDQHQIILTADLTSGAQVNDLYKMPELVQAWSNQTPNLYTLELEVVDQAGETIEISQQPFGFRKIEIKDKVMLLNGKRLVINGVNRHEWHPETGRTITAEDEAWDIACMQRNHINAVRTSHYPDRLSFYNGCDQAGIYMMAETNLESHGSWQKMGAVEPSWNVPGSYDEWEAATLDRARTNFETFKNHVSILFWSLGNESYAGSVLEKMNAYYKQQDPTRLVHYEGVFRAPEYKATISDVESRMYATPAEIKAYLDNAPQKPFILCEYMHDMGNSLGGMQSYIDLLSQYDMYQGGFIWDFIDQALLVTDPVTGQRELRYGGDFDDRPSDYEFSGDGLVFATRDEKPAMQEVRYYYGEHK.

Catalysis depends on Glu465, which acts as the Proton donor. Glu533 functions as the Nucleophile in the catalytic mechanism.

Belongs to the glycosyl hydrolase 2 family. As to quaternary structure, heterodimer of a large (LacL) and a small subunit (LacM).

The catalysed reaction is Hydrolysis of terminal non-reducing beta-D-galactose residues in beta-D-galactosides.. Its function is as follows. Component of a beta-galactosidase. The chain is Beta-galactosidase large subunit from Latilactobacillus sakei (Lactobacillus sakei).